The primary structure comprises 418 residues: Glutamyl-tRNA reductase (418 aa).

Residues 49–52 (TCNR), Ser-109, 114–116 (EPQ), and Gln-120 contribute to the substrate site. Catalysis depends on Cys-50, which acts as the Nucleophile. 189–194 (GAGETI) lines the NADP(+) pocket.

It belongs to the glutamyl-tRNA reductase family. As to quaternary structure, homodimer.

The enzyme catalyses (S)-4-amino-5-oxopentanoate + tRNA(Glu) + NADP(+) = L-glutamyl-tRNA(Glu) + NADPH + H(+). Its pathway is porphyrin-containing compound metabolism; protoporphyrin-IX biosynthesis; 5-aminolevulinate from L-glutamyl-tRNA(Glu): step 1/2. Catalyzes the NADPH-dependent reduction of glutamyl-tRNA(Glu) to glutamate 1-semialdehyde (GSA). The polypeptide is Glutamyl-tRNA reductase (Salmonella dublin (strain CT_02021853)).